We begin with the raw amino-acid sequence, 132 residues long: Methylglyoxal synthase (132 aa).

An MGS-like domain is found at 1-132 (MNIALIAHDQ…LLEWREIEDK (132 aa)). Substrate is bound by residues histidine 8 and lysine 12. The active-site Proton donor/acceptor is the aspartate 60. Position 87 (histidine 87) interacts with substrate.

The protein belongs to the methylglyoxal synthase family.

The enzyme catalyses dihydroxyacetone phosphate = methylglyoxal + phosphate. In terms of biological role, catalyzes the formation of methylglyoxal from dihydroxyacetone phosphate. This Thermoanaerobacter pseudethanolicus (strain ATCC 33223 / 39E) (Clostridium thermohydrosulfuricum) protein is Methylglyoxal synthase.